Reading from the N-terminus, the 141-residue chain is Aspartate 1-decarboxylase 1 (141 aa).

Ser25 functions as the Schiff-base intermediate with substrate; via pyruvic acid in the catalytic mechanism. Ser25 carries the pyruvic acid (Ser) modification. Thr57 contributes to the substrate binding site. Tyr58 (proton donor) is an active-site residue. Substrate is bound at residue 73-75 (GPA).

Belongs to the PanD family. As to quaternary structure, heterooctamer of four alpha and four beta subunits. Pyruvate serves as cofactor. Post-translationally, is synthesized initially as an inactive proenzyme, which is activated by self-cleavage at a specific serine bond to produce a beta-subunit with a hydroxyl group at its C-terminus and an alpha-subunit with a pyruvoyl group at its N-terminus.

It localises to the cytoplasm. It carries out the reaction L-aspartate + H(+) = beta-alanine + CO2. It functions in the pathway cofactor biosynthesis; (R)-pantothenate biosynthesis; beta-alanine from L-aspartate: step 1/1. In terms of biological role, catalyzes the pyruvoyl-dependent decarboxylation of aspartate to produce beta-alanine. The sequence is that of Aspartate 1-decarboxylase 1 from Paenarthrobacter aurescens (strain TC1).